Here is a 525-residue protein sequence, read N- to C-terminus: MSGSATASPPAKPDLPSSDGAGLTPDAQCPYLLEISHISKGFPGVIALDDVQLRLRPGSVLALMGENGAGKSTLMKIIAGIYQPDTGEIRLRGKPISFTTPLSALQAGIAMIHQELNLMPFMSIAENIWIGREQLNGLHMVDHREMHRCTAQLLERLRIKLDPEELVGNLSIAERQMVEIAKAVSYDSDVLIMDEPTSAITETEVEHLFSIIADLRSQGKGIIYITHKMNEVFKIADEVAVFRDGTYIGLQRAESMDGDSLISMMVGRELTQLFPQREKPAGDVLLSVSDLSLKGIFQQVSFDLRAGEVLGIAGLMGSGRTNVAETLFGITPSDSGEIRFDGKTVRIGDPHQAIELGFALLTEDRKLTGLFPCLSVMENMEMAVLANYAGSGFVQQKALRALCEDMCKKLRVKTPSLEQCIDTLSGGNQQKALLARWLMTNPRVLILDEPTRGIDVGAKAEIYRLISLLASEGMAVIMISSELPEVLGMSDRVMVMHEGEMMGILDRSEATQEKVMHLASGHRVH.

The tract at residues 1 to 20 (MSGSATASPPAKPDLPSSDG) is disordered. ABC transporter domains are found at residues 33–269 (LEIS…VGRE) and 279–523 (KPAG…SGHR). Residue 65–72 (GENGAGKS) coordinates ATP.

The protein belongs to the ABC transporter superfamily. Carbohydrate importer 2 (CUT2) (TC 3.A.1.2) family.

Its subcellular location is the cell inner membrane. It catalyses the reaction D-ribose(out) + ATP + H2O = D-ribose(in) + ADP + phosphate + H(+). The enzyme catalyses D-galactose(out) + ATP + H2O = D-galactose(in) + ADP + phosphate + H(+). Functionally, part of an ABC transporter complex involved in carbohydrate import. Could be involved in ribose, galactose and/or methyl galactoside import. Responsible for energy coupling to the transport system. The sequence is that of Putative ribose/galactose/methyl galactoside import ATP-binding protein from Pseudomonas syringae pv. tomato (strain ATCC BAA-871 / DC3000).